A 511-amino-acid polypeptide reads, in one-letter code: Cytochrome P450 monooxygenase esdpI (511 aa).

The chain crosses the membrane as a helical span at residues 14 to 34 (VRAGLAIGVAILAIIVLFPGI). A heme-binding site is contributed by Cys-453.

Belongs to the cytochrome P450 family. Requires heme as cofactor.

It localises to the membrane. Its pathway is secondary metabolite biosynthesis; terpenoid biosynthesis. Cytochrome P450 monooxygenase; part of the cluster that mediates the biosynthesis of shearones, diterpenoid pyrones (DPs) which are structurally diverse meroterpenoids consisting of a diterpene linked by a pyrone, and which may exhibit a range of bioactivities. Whitin the pathway, esdpI takes part in the molecular scaffold modification via the hydroxylation at C-20 and can transform shearone C into shearone G. The molecular scaffold is commonly biosynthesized by a series of enzymes including the non-reducing polyketide synthase (NR-PKS) esdpA that generates an alpha-pyrone; the prenyltransferase esdpC that attaches a geranylgeranyl pyrophosphate (GGPP) produced by the GGPP synthase (GGPPS) esdpD onto the pyrone unit; the FAD-dependent monooxygenase esdpE that converts an olefin on the diterpene unit into an epoxide; and the terpene cyclase esdpB that catalyzes the cyclization reactions to give the molecular backbone shearone A. In the modification steps, esdpF oxidizes the hydroxy group to a ketone at C-3 and esdpG then attaches hydroxy groups at both C-11 and C-12. After that, esdpI hydroxylates at C-20 and esdpH hydroxylates at C-6'. The ether bridge is generated by nucleophilic attack of the hydroxy group at C-20 to the carbonyl carbon at C-3. EsdpH can also functions prior to esdpI. The different combinations of these modification enzymes lead to the production of diverse shearone derivatives, shearone I being the end product of the pathway. The alpha-ketoglutarate-dependent dioxygenase esdpJ seems not to be involved in this pathway. The polypeptide is Cytochrome P450 monooxygenase esdpI (Penicillium shearii (Eupenicillium shearii)).